A 693-amino-acid chain; its full sequence is UvrABC system protein B (693 aa).

In terms of domain architecture, Helicase ATP-binding spans 35-188 (ERINNGEKDV…DQLLRQFVGI (154 aa)). Position 48 to 55 (48 to 55 (GATGTGKS)) interacts with ATP. A Beta-hairpin motif is present at residues 101 to 124 (YYDYYQPEAYVPQTDTFIEKDSSV). Residues 438-600 (QIDDLLGEIR…VDPTPLRKRI (163 aa)) form the Helicase C-terminal domain. The segment at 612 to 634 (ADTKSLLESAGKGRSRGKAPVPV) is disordered. One can recognise a UVR domain in the interval 648 to 683 (VDLIEQLTAQMHSAAGELQFELAARLRDEVGDLKKE).

This sequence belongs to the UvrB family. As to quaternary structure, forms a heterotetramer with UvrA during the search for lesions. Interacts with UvrC in an incision complex.

It is found in the cytoplasm. Its function is as follows. The UvrABC repair system catalyzes the recognition and processing of DNA lesions. A damage recognition complex composed of 2 UvrA and 2 UvrB subunits scans DNA for abnormalities. Upon binding of the UvrA(2)B(2) complex to a putative damaged site, the DNA wraps around one UvrB monomer. DNA wrap is dependent on ATP binding by UvrB and probably causes local melting of the DNA helix, facilitating insertion of UvrB beta-hairpin between the DNA strands. Then UvrB probes one DNA strand for the presence of a lesion. If a lesion is found the UvrA subunits dissociate and the UvrB-DNA preincision complex is formed. This complex is subsequently bound by UvrC and the second UvrB is released. If no lesion is found, the DNA wraps around the other UvrB subunit that will check the other stand for damage. This Renibacterium salmoninarum (strain ATCC 33209 / DSM 20767 / JCM 11484 / NBRC 15589 / NCIMB 2235) protein is UvrABC system protein B.